The chain runs to 229 residues: Germin-like protein 2-4 (229 aa).

Residues 1–23 form the signal peptide; sequence MAHRRRCLLLLLAVLLPAMAARG. Cys32 and Cys52 form a disulfide bridge. Asn57 is a glycosylation site (N-linked (GlcNAc...) asparagine). The Cupin type-1 domain maps to 66–213; sequence SGVRAAGNFS…AFGLTPAELR (148 aa). Mn(2+) contacts are provided by His115, His117, Glu122, and His161.

Belongs to the germin family. In terms of assembly, oligomer (believed to be a pentamer but probably hexamer).

The protein localises to the secreted. The protein resides in the extracellular space. It is found in the apoplast. Functionally, may play a role in plant defense. Probably has no oxalate oxidase activity even if the active site is conserved. The protein is Germin-like protein 2-4 of Oryza sativa subsp. japonica (Rice).